The following is a 223-amino-acid chain: uncharacterized protein (223 aa).

Residues Cys-33 to Cys-67 form a C4-type zinc finger.

The protein belongs to the ZPR1 family.

This is an uncharacterized protein from Pyrococcus horikoshii (strain ATCC 700860 / DSM 12428 / JCM 9974 / NBRC 100139 / OT-3).